The sequence spans 611 residues: Serine/arginine repetitive matrix protein 4 (611 aa).

Disordered regions lie at residues 38-248 (ARKP…PLQM) and 263-611 (SAAD…STRR). Composition is skewed to basic residues over residues 107-123 (RGKK…RRRS) and 131-189 (VKKK…HRCP). The span at 190–202 (SRSQSSESRPSSC) shows a compositional bias: low complexity. Residues 203-216 (ESRHRGRSPEEGQK) show a composition bias toward basic and acidic residues. Residues 217–226 (SRRRHSRRCS) show a composition bias toward basic residues. Positions 270–290 (KTASPLTTSRGRSQEYDSGND) are enriched in polar residues. Residues 291 to 301 (TSSPPSTQTSS) are compositionally biased toward low complexity. Over residues 322 to 341 (LNSGNTSDSGNSFTTSSPQN) the composition is skewed to polar residues. 2 stretches are compositionally biased toward low complexity: residues 390–422 (SRSS…SRST) and 430–461 (SRSP…SRYS). Positions 462–482 (PSRERDPKYSEKDSQQRERER) are enriched in basic and acidic residues. A compositionally biased stretch (basic residues) spans 483 to 498 (ARRRRRSYSPMRKRRR). Residues 499–508 (DSPSHLEARR) show a composition bias toward basic and acidic residues. Over residues 522–549 (PSPSSSGSLSSTSSWYSSSSSRSASRSY) the composition is skewed to low complexity. Residues 550–564 (SRSRSRSRSRRRSRT) are compositionally biased toward basic residues. Residues 565-580 (RTSSSSSSRSPSPGSR) are compositionally biased toward low complexity. A compositionally biased stretch (basic residues) spans 581–595 (SRSRSRSRSRSRSRS). Positions 596–611 (QSRSYSSADSYSSTRR) are enriched in low complexity.

Belongs to the nSR100 family. Post-translationally, phosphorylated. As to expression, specifically expressed in neuronal cells (at protein level). Expressed in the cerebellum.

Its subcellular location is the nucleus. Splicing factor specifically required for neural cell differentiation. Acts in conjunction with nPTB/PTBP2 by binding directly to its regulated target transcripts and promotes neural-specific exon inclusion in many genes that function in neural cell differentiation. Required to promote the inclusion of neural-specific exon 10 in nPTB/PTBP2, leading to increased expression of neural-specific nPTB/PTBP2. Also promotes the inclusion of exon 16 in DAAM1 in neuron extracts. Promotes alternative splicing of REST transcripts to produce REST isoform 3 (REST4) with greatly reduced repressive activity, thereby activating expression of REST targets in neural cells. Plays an important role during embryonic development as well as in the proper functioning of the adult nervous system. Regulates alternative splicing events in genes with important neuronal functions. This chain is Serine/arginine repetitive matrix protein 4 (SRRM4), found in Homo sapiens (Human).